We begin with the raw amino-acid sequence, 319 residues long: Protease HtpX homolog (319 aa).

2 helical membrane passes run 6 to 26 (TAML…VIGG) and 28 to 48 (GGMM…YWNS). Residue His130 coordinates Zn(2+). Residue Glu131 is part of the active site. His134 serves as a coordination point for Zn(2+). 2 consecutive transmembrane segments (helical) span residues 145–165 (LTAT…FFGG) and 172–192 (PLGF…AMLV). Glu201 is a binding site for Zn(2+). A disordered region spans residues 279-319 (REMSAGSTAPARPDNAVRRSRSVPKTGWGRGGSEPPKGPWS).

This sequence belongs to the peptidase M48B family. It depends on Zn(2+) as a cofactor.

The protein resides in the cell inner membrane. This is Protease HtpX homolog from Sinorhizobium fredii (strain NBRC 101917 / NGR234).